The primary structure comprises 257 residues: MSTASEQARLRRERRLNKIKQGGASRINQILGQNSDDSQSDVRATASEEAVHSETATPVTPMSSGFMEKRDDTFNADQVEYLPSQDYHNLESSPFKLQCDSPYNVPPENMFNQNPDFANFFQAMLQSAKEGSDTNFQGENEQIPQATAPLKNLVEKYAHLLAISIVVIVCYFKHLPLLPWTFTVEACLFSIQFVLDRNNGPSYSLLASLASQLPPPYGAMIRHTTSYVPYFTQLITDACMTIFALGLCCYFYPSLVY.

The segment at 16-68 (LNKIKQGGASRINQILGQNSDDSQSDVRATASEEAVHSETATPVTPMSSGFME) is disordered. Composition is skewed to polar residues over residues 26–37 (RINQILGQNSDD) and 54–63 (ETATPVTPMS). Residue S35 is modified to Phosphoserine. Phosphoserine is present on S132. Residue T134 is modified to Phosphothreonine. Helical transmembrane passes span 160 to 180 (LLAI…LLPW) and 231 to 251 (FTQL…CCYF).

Interacts with kms1 and sad1.

The protein localises to the membrane. In Schizosaccharomyces pombe (strain 972 / ATCC 24843) (Fission yeast), this protein is Sad1-interacting factor 1 (sif1).